The chain runs to 767 residues: Transferrin receptor protein 1 (767 aa).

The Cytoplasmic segment spans residues 1 to 67 (MDQARSAFSN…LTKPKRFNGS (67 aa)). 2 positions are modified to phosphoserine: Ser-9 and Ser-18. Tyr-19 is modified (phosphotyrosine). Residues 19–22 (YTRF) carry the Endocytosis signal motif. Thr-20 carries the post-translational modification Phosphothreonine. At Ser-23 the chain carries Phosphoserine. The Stop-transfer sequence motif lies at 60 to 63 (KPKR). Residues 68–88 (FCYAVIAVIIFFLIGFMIGYL) traverse the membrane as a helical; Signal-anchor for type II membrane protein segment. Cys-69 carries the S-palmitoyl cysteine lipid modification. Over 89–767 (GYCKRVEPKS…GDIWDIDNEF (679 aa)) the chain is Extracellular. Positions 96 to 110 (PKSECGRSGDSKEIE) are enriched in basic and acidic residues. The segment at 96-122 (PKSECGRSGDSKEIEGTEPPETEEYFP) is disordered. Positions 111 to 121 (GTEPPETEEYF) are enriched in acidic residues. Asn-211, Asn-258, and Asn-324 each carry an N-linked (GlcNAc...) asparagine glycan. In terms of domain architecture, PA spans 230 to 320 (SKATTVTGKL…GTGDPYTPGF (91 aa)). Residues 576–767 (TMDTYEVLSQ…GDIWDIDNEF (192 aa)) form a ligand-binding region. Residues 653–655 (RGD) carry the Cell attachment site motif. Asn-734 carries an N-linked (GlcNAc...) asparagine glycan.

It belongs to the peptidase M28 family. M28B subfamily. In terms of assembly, homodimer; disulfide-linked. Binds one transferrin or HFE molecule per subunit. Interacts with SH3BP4. Interacts with STEAP3; facilitates TFRC endocytosis in erythroid precursor cells. In terms of processing, stearoylated by ZDHHC6 which inhibits TFRC-mediated activation of the JNK pathway and promotes mitochondrial fragmentation. Stearoylation does not affect iron uptake.

The protein localises to the cell membrane. The protein resides in the melanosome. Cellular uptake of iron occurs via receptor-mediated endocytosis of ligand-occupied transferrin receptor into specialized endosomes. Endosomal acidification leads to iron release. The apotransferrin-receptor complex is then recycled to the cell surface with a return to neutral pH and the concomitant loss of affinity of apotransferrin for its receptor. Transferrin receptor is necessary for development of erythrocytes and the nervous system. Positively regulates T and B cell proliferation through iron uptake. Acts as a lipid sensor that regulates mitochondrial fusion by regulating activation of the JNK pathway. When dietary levels of stearate (C18:0) are low, promotes activation of the JNK pathway, resulting in HUWE1-mediated ubiquitination and subsequent degradation of the mitofusin MFN2 and inhibition of mitochondrial fusion. When dietary levels of stearate (C18:0) are high, TFRC stearoylation inhibits activation of the JNK pathway and thus degradation of the mitofusin MFN2. Mediates uptake of NICOL1 into fibroblasts where it may regulate extracellular matrix production. This is Transferrin receptor protein 1 (TFRC) from Equus caballus (Horse).